A 525-amino-acid chain; its full sequence is Packaging protein UL32 homolog (525 aa).

Polar residues predominate over residues 1-12; sequence MAHKVTSANEPN. Residues 1 to 20 are disordered; sequence MAHKVTSANEPNPLTGKRLS. Zn(2+)-binding residues include Cys-95, Cys-98, His-173, Cys-179, Cys-255, Cys-256, Cys-357, Cys-360, His-427, Cys-434, Cys-473, and His-510. Zinc finger regions lie at residues 95 to 179, 255 to 510, and 357 to 434; these read CRVC…ICRC, CCHL…LRIH, and CPLC…DPLC.

The protein belongs to the herpesviridae UL32 protein family.

The protein localises to the host cytoplasm. Its subcellular location is the host nucleus. Functionally, plays a role in efficient localization of neo-synthesized capsids to nuclear replication compartments, thereby controlling cleavage and packaging of virus genomic DNA. The sequence is that of Packaging protein UL32 homolog from Epstein-Barr virus (strain B95-8) (HHV-4).